Consider the following 690-residue polypeptide: Tripartite terminase subunit 3 (690 aa).

A Walker A motif motif is present at residues 226–233; sequence IPRRHGKT. Residues 321 to 326 carry the Walker B motif motif; that stretch reads LLFVDE. The active-site For ATPase activity is the glutamate 326. Active-site for nuclease activity residues include aspartate 481, glutamate 555, and aspartate 667.

This sequence belongs to the herpesviridae TRM3 protein family. In terms of assembly, interacts with the terminase subunits TRM1 and TRM2. Interacts with portal protein.

The protein localises to the host nucleus. In terms of biological role, component of the molecular motor that translocates viral genomic DNA in empty capsid during DNA packaging. Forms a tripartite terminase complex together with TRM1 and TRM2 in the host cytoplasm. Once the complex reaches the host nucleus, it interacts with the capsid portal vertex. This portal forms a ring in which genomic DNA is translocated into the capsid. TRM3 carries an RNase H-like nuclease activity that plays an important role for the cleavage of concatemeric viral DNA into unit length genomes. The protein is Tripartite terminase subunit 3 of Homo sapiens (Human).